A 418-amino-acid polypeptide reads, in one-letter code: Putative ion-transport protein YfeO (418 aa).

Helical transmembrane passes span 15–37 (PAVA…ASVL), 57–79 (LWII…FSQG), 99–118 (ALPR…VSLG), 149–171 (ILAS…LIFS), 186–208 (LFAP…HPHF), 221–243 (TDIL…AVWC), 258–280 (VLVL…PVSL), 301–323 (YFLL…FRGG), 343–363 (VPAV…VLVV), and 376–398 (VVVP…WLLL).

The protein belongs to the chloride channel (TC 2.A.49) family.

It localises to the cell membrane. This Shigella flexneri protein is Putative ion-transport protein YfeO (yfeO).